Reading from the N-terminus, the 375-residue chain is DNA replication and repair protein RecF (375 aa).

Residue Gly30–Thr37 participates in ATP binding.

This sequence belongs to the RecF family.

It localises to the cytoplasm. The RecF protein is involved in DNA metabolism; it is required for DNA replication and normal SOS inducibility. RecF binds preferentially to single-stranded, linear DNA. It also seems to bind ATP. The chain is DNA replication and repair protein RecF from Bacillus mycoides (strain KBAB4) (Bacillus weihenstephanensis).